The chain runs to 207 residues: Dephospho-CoA kinase (207 aa).

The region spanning 4–203 is the DPCK domain; that stretch reads VIGLTGGIAS…EEGYIEKPNY (200 aa). 12 to 17 is an ATP binding site; it reads ASGKST.

This sequence belongs to the CoaE family.

It is found in the cytoplasm. The enzyme catalyses 3'-dephospho-CoA + ATP = ADP + CoA + H(+). It participates in cofactor biosynthesis; coenzyme A biosynthesis; CoA from (R)-pantothenate: step 5/5. Functionally, catalyzes the phosphorylation of the 3'-hydroxyl group of dephosphocoenzyme A to form coenzyme A. This chain is Dephospho-CoA kinase, found in Staphylococcus aureus (strain MRSA252).